We begin with the raw amino-acid sequence, 188 residues long: MSLLPYNATLCRVLRHNVKFIRSVQTSAARVSAEKTPIQVWGWDYLMRQRALKRPIAPHLTIYKPQMTWMVSGLHRVTGCAMAGTLLIGGVGFSVLPLDFTTFVEFIRGLGIPWVILDTFKFIIAFPIAFHTLNGIRFIGFDMAKGTDIPSIYRGAYLVLGLAALISLAVVVYPRWERHKKATLPTNH.

A mitochondrion-targeting transit peptide spans 1–31 (MSLLPYNATLCRVLRHNVKFIRSVQTSAARV). Over 32–69 (SAEKTPIQVWGWDYLMRQRALKRPIAPHLTIYKPQMTW) the chain is Mitochondrial matrix. Residues 70–95 (MVSGLHRVTGCAMAGTLLIGGVGFSV) form a helical membrane-spanning segment. Positions 72 and 76 each coordinate a rhodoquinol. A ubiquinone contacts are provided by Ser-72 and Arg-76. At 96–113 (LPLDFTTFVEFIRGLGIP) the chain is on the mitochondrial intermembrane side. Residues 114–140 (WVILDTFKFIIAFPIAFHTLNGIRFIG) form a helical membrane-spanning segment. His-131 serves as a coordination point for heme b. The Mitochondrial matrix segment spans residues 141–153 (FDMAKGTDIPSIY). The helical transmembrane segment at 154–176 (RGAYLVLGLAALISLAVVVYPRW) threads the bilayer. Residues 177–188 (ERHKKATLPTNH) are Mitochondrial intermembrane-facing.

It belongs to the cytochrome b558 family. As to quaternary structure, component of the mitochondrial electron transport chain complex II composed of four subunits: a flavoprotein (Fp), an iron-sulfur protein (Ip), and a large cytochrome b (CybL) subunit and a small cytochrome b (CybS) subunit. There are 2 developmental stage-specific forms of complex II which have the Ip and CybL subunits in common. Complex II from the free-living larvae (aerobic environment) acts as a succinate dehydrogenase and is composed of the common subunit Ip and CybL and the stage specific subunits FpL and CybSL. Complex II from parasitic larvae and adults (anaerobic environment) acts as a fumarate reductase and is composed of the common subunit Ip and CybL and the stage specific subunits FpA and CybSA. The cofactor is heme b. In terms of tissue distribution, expressed in adult muscles (at protein level).

It is found in the mitochondrion inner membrane. The protein operates within carbohydrate metabolism; tricarboxylic acid cycle; fumarate from succinate (eukaryal route): step 1/1. Membrane-bound large subunit (CybL) of the mitochondrial electron transport chain complex II, which together with the membrane-bound small subunit (CybS), anchor the catalytic subunits to the inner mitochondria membrane. During the free-living egg-larvae stages, which occur in an aerobic environment, complex II acts as a succinate dehydrogenase by transferring electrons from succinate to ubiquinone. During the parasitic larvae and adult stages, which occur in an anaerobic environment, complex II acts as a fumarate reductase by transferring electrons from rhodoquinol to fumarate. In Ascaris suum (Pig roundworm), this protein is Succinate dehydrogenase [ubiquinone] cytochrome b large subunit, mitochondrial.